The sequence spans 374 residues: Peptide chain release factor 2 (374 aa).

Gln252 is modified (N5-methylglutamine).

This sequence belongs to the prokaryotic/mitochondrial release factor family. Post-translationally, methylated by PrmC. Methylation increases the termination efficiency of RF2.

Its subcellular location is the cytoplasm. Functionally, peptide chain release factor 2 directs the termination of translation in response to the peptide chain termination codons UGA and UAA. This chain is Peptide chain release factor 2, found in Xanthomonas euvesicatoria pv. vesicatoria (strain 85-10) (Xanthomonas campestris pv. vesicatoria).